Reading from the N-terminus, the 98-residue chain is Defensin-like protein 68 (98 aa).

The signal sequence occupies residues 1-19 (MGSSKLLVALTLVVMITIS). Disulfide bonds link Cys-38–Cys-88, Cys-42–Cys-65, Cys-51–Cys-86, and Cys-55–Cys-87.

The protein belongs to the DEFL family.

It is found in the secreted. This Arabidopsis thaliana (Mouse-ear cress) protein is Defensin-like protein 68.